A 122-amino-acid chain; its full sequence is Large ribosomal subunit protein uL14 (122 aa).

The protein belongs to the universal ribosomal protein uL14 family. Part of the 50S ribosomal subunit. Forms a cluster with proteins L3 and L19. In the 70S ribosome, L14 and L19 interact and together make contacts with the 16S rRNA in bridges B5 and B8.

In terms of biological role, binds to 23S rRNA. Forms part of two intersubunit bridges in the 70S ribosome. This chain is Large ribosomal subunit protein uL14, found in Magnetococcus marinus (strain ATCC BAA-1437 / JCM 17883 / MC-1).